The primary structure comprises 310 residues: Biotin synthase (310 aa).

Residues 34–262 form the Radical SAM core domain; sequence GRVQLCALVN…TAQIRLSAGR (229 aa). 3 residues coordinate [4Fe-4S] cluster: Cys49, Cys53, and Cys56. [2Fe-2S] cluster-binding residues include Cys93, Cys125, Cys185, and Arg257.

This sequence belongs to the radical SAM superfamily. Biotin synthase family. In terms of assembly, homodimer. The cofactor is [4Fe-4S] cluster. It depends on [2Fe-2S] cluster as a cofactor.

The enzyme catalyses (4R,5S)-dethiobiotin + (sulfur carrier)-SH + 2 reduced [2Fe-2S]-[ferredoxin] + 2 S-adenosyl-L-methionine = (sulfur carrier)-H + biotin + 2 5'-deoxyadenosine + 2 L-methionine + 2 oxidized [2Fe-2S]-[ferredoxin]. It functions in the pathway cofactor biosynthesis; biotin biosynthesis; biotin from 7,8-diaminononanoate: step 2/2. Its function is as follows. Catalyzes the conversion of dethiobiotin (DTB) to biotin by the insertion of a sulfur atom into dethiobiotin via a radical-based mechanism. This chain is Biotin synthase, found in Synechococcus sp. (strain JA-3-3Ab) (Cyanobacteria bacterium Yellowstone A-Prime).